The sequence spans 344 residues: Arginine N-succinyltransferase (344 aa).

Leu125 serves as a coordination point for succinyl-CoA. The active-site Proton donor is the His229.

Belongs to the arginine N-succinyltransferase family.

It carries out the reaction succinyl-CoA + L-arginine = N(2)-succinyl-L-arginine + CoA + H(+). The protein operates within amino-acid degradation; L-arginine degradation via AST pathway; L-glutamate and succinate from L-arginine: step 1/5. Catalyzes the transfer of succinyl-CoA to arginine to produce N(2)-succinylarginine. The polypeptide is Arginine N-succinyltransferase (Citrobacter koseri (strain ATCC BAA-895 / CDC 4225-83 / SGSC4696)).